The following is a 74-amino-acid chain: Brevinin-2MT1 (74 aa).

The signal sequence occupies residues 1-22; the sequence is MFTMKKSLLVLFFLGTISLSLC. Positions 23–39 are cleaved as a propeptide — removed in mature form; it reads EEERNADEDDGEMTEEE. Cys68 and Cys74 form a disulfide bridge.

It belongs to the frog skin active peptide (FSAP) family. Brevinin subfamily. In terms of tissue distribution, expressed by the skin glands.

Its subcellular location is the secreted. Functionally, antimicrobial peptide. Active against a variety of Gram-negative and Gram-positive bacterial strains. Active against fungi. Shows hemolytic activity against human erythrocytes. The chain is Brevinin-2MT1 from Amolops mantzorum (Sichuan torrent frog).